A 201-amino-acid polypeptide reads, in one-letter code: UPF0301 protein BP0319 (201 aa).

The protein belongs to the UPF0301 (AlgH) family.

In Bordetella pertussis (strain Tohama I / ATCC BAA-589 / NCTC 13251), this protein is UPF0301 protein BP0319.